Here is a 121-residue protein sequence, read N- to C-terminus: Putative ankyrin repeat protein L215 (121 aa).

ANK repeat units lie at residues 10 to 40 (QYDS…SFKE) and 42 to 71 (IHET…NKLV).

This chain is Putative ankyrin repeat protein L215, found in Acanthamoeba polyphaga mimivirus (APMV).